Consider the following 345-residue polypeptide: RNA pseudouridine synthase 1 (345 aa).

Residue D134 is part of the active site.

It belongs to the pseudouridine synthase RluA family.

It catalyses the reaction a uridine in RNA = a pseudouridine in RNA. The sequence is that of RNA pseudouridine synthase 1 from Oryza sativa subsp. japonica (Rice).